The following is a 237-amino-acid chain: tRNA (guanine-N(7)-)-methyltransferase (237 aa).

The disordered stretch occupies residues M1–L24. Residues E62, E87, D119, and D141 each contribute to the S-adenosyl-L-methionine site. Residue D141 is part of the active site. Residues K145, D177, and T216 to E219 contribute to the substrate site.

This sequence belongs to the class I-like SAM-binding methyltransferase superfamily. TrmB family.

It carries out the reaction guanosine(46) in tRNA + S-adenosyl-L-methionine = N(7)-methylguanosine(46) in tRNA + S-adenosyl-L-homocysteine. It functions in the pathway tRNA modification; N(7)-methylguanine-tRNA biosynthesis. Its function is as follows. Catalyzes the formation of N(7)-methylguanine at position 46 (m7G46) in tRNA. The protein is tRNA (guanine-N(7)-)-methyltransferase of Sphingopyxis alaskensis (strain DSM 13593 / LMG 18877 / RB2256) (Sphingomonas alaskensis).